A 202-amino-acid polypeptide reads, in one-letter code: Large ribosomal subunit protein eL13 (202 aa).

It belongs to the eukaryotic ribosomal protein eL13 family.

The polypeptide is Large ribosomal subunit protein eL13 (RPL13) (Nicotiana tabacum (Common tobacco)).